The sequence spans 145 residues: Fluoride-specific ion channel FluC 2 (145 aa).

4 consecutive transmembrane segments (helical) span residues 16–36, 42–62, 80–100, and 113–133; these read MLLVFVGGALGTAARALLSAA, VISVITFVINVIGAFVLGWLL, LFAGTGVLGGFTTYSAFAVDT, and ILYAAATIAIGAAAYLAGIAL. Positions 88 and 91 each coordinate Na(+).

The protein belongs to the fluoride channel Fluc/FEX (TC 1.A.43) family.

The protein localises to the cell membrane. It catalyses the reaction fluoride(in) = fluoride(out). Its activity is regulated as follows. Na(+) is not transported, but it plays an essential structural role and its presence is essential for fluoride channel function. In terms of biological role, fluoride-specific ion channel. Important for reducing fluoride concentration in the cell, thus reducing its toxicity. The sequence is that of Fluoride-specific ion channel FluC 2 from Leifsonia xyli subsp. xyli (strain CTCB07).